Reading from the N-terminus, the 682-residue chain is Probable potassium transport system protein Kup (682 aa).

12 consecutive transmembrane segments (helical) span residues 13–33 (GLLV…LYVM), 55–75 (ISLI…LIAL), 98–118 (WLVI…TLTP), 138–158 (IPVP…LFLF), 171–191 (TFGP…IMNL), 217–237 (VGVL…ALYS), 250–270 (SWPY…VWIL), 295–315 (FFAI…LITG), 344–364 (LFIP…VFLF), 375–395 (GLAI…YLSL), 405–425 (VFLL…LAKF), and 428–448 (GGYV…IWYF).

Belongs to the HAK/KUP transporter (TC 2.A.72) family.

It is found in the cell membrane. It carries out the reaction K(+)(in) + H(+)(in) = K(+)(out) + H(+)(out). In terms of biological role, transport of potassium into the cell. Likely operates as a K(+):H(+) symporter. This chain is Probable potassium transport system protein Kup, found in Lactobacillus gasseri (strain ATCC 33323 / DSM 20243 / BCRC 14619 / CIP 102991 / JCM 1131 / KCTC 3163 / NCIMB 11718 / NCTC 13722 / AM63).